Consider the following 828-residue polypeptide: Periplasmic nitrate reductase (828 aa).

Residues 1–32 (MNLSRRDFMKANAAMAAATAAGLSIPVKNVEA) constitute a signal peptide (tat-type signal). The 4Fe-4S Mo/W bis-MGD-type domain maps to 37-93 (IKWDKAVCRFCGTGCAVLVGTKDGRVVASQGDPDAEVNRGLNCIKGYFLPKIMYGKD). [4Fe-4S] cluster-binding residues include Cys-44, Cys-47, Cys-51, and Cys-79. Mo-bis(molybdopterin guanine dinucleotide)-binding positions include Lys-81, Gln-148, Asn-173, Cys-177, 210 to 217 (WGSNMAEM), 241 to 245 (STFEH), Met-371, Gln-375, Asn-481, 507 to 508 (SD), Lys-530, Asp-557, and 717 to 726 (TGRVLEHWHT). Residue Phe-793 coordinates substrate. Residues Asn-801 and Lys-818 each coordinate Mo-bis(molybdopterin guanine dinucleotide).

It belongs to the prokaryotic molybdopterin-containing oxidoreductase family. NasA/NapA/NarB subfamily. In terms of assembly, component of the periplasmic nitrate reductase NapAB complex composed of NapA and NapB. Requires [4Fe-4S] cluster as cofactor. It depends on Mo-bis(molybdopterin guanine dinucleotide) as a cofactor. Predicted to be exported by the Tat system. The position of the signal peptide cleavage has not been experimentally proven.

It is found in the periplasm. It carries out the reaction 2 Fe(II)-[cytochrome] + nitrate + 2 H(+) = 2 Fe(III)-[cytochrome] + nitrite + H2O. In terms of biological role, catalytic subunit of the periplasmic nitrate reductase complex NapAB. Receives electrons from NapB and catalyzes the reduction of nitrate to nitrite. The sequence is that of Periplasmic nitrate reductase from Aggregatibacter actinomycetemcomitans (Actinobacillus actinomycetemcomitans).